Consider the following 240-residue polypeptide: Aspartate/glutamate leucyltransferase (240 aa).

This sequence belongs to the R-transferase family. Bpt subfamily.

The protein resides in the cytoplasm. It carries out the reaction N-terminal L-glutamyl-[protein] + L-leucyl-tRNA(Leu) = N-terminal L-leucyl-L-glutamyl-[protein] + tRNA(Leu) + H(+). The catalysed reaction is N-terminal L-aspartyl-[protein] + L-leucyl-tRNA(Leu) = N-terminal L-leucyl-L-aspartyl-[protein] + tRNA(Leu) + H(+). Its function is as follows. Functions in the N-end rule pathway of protein degradation where it conjugates Leu from its aminoacyl-tRNA to the N-termini of proteins containing an N-terminal aspartate or glutamate. In Gluconobacter oxydans (strain 621H) (Gluconobacter suboxydans), this protein is Aspartate/glutamate leucyltransferase.